The chain runs to 352 residues: DNA polymerase IV (352 aa).

Residues Ile-4–Gly-185 form the UmuC domain. Residues Asp-8 and Asp-103 each coordinate Mg(2+). Glu-104 is a catalytic residue.

Belongs to the DNA polymerase type-Y family. As to quaternary structure, monomer. It depends on Mg(2+) as a cofactor.

It is found in the cytoplasm. It carries out the reaction DNA(n) + a 2'-deoxyribonucleoside 5'-triphosphate = DNA(n+1) + diphosphate. Poorly processive, error-prone DNA polymerase involved in untargeted mutagenesis. Copies undamaged DNA at stalled replication forks, which arise in vivo from mismatched or misaligned primer ends. These misaligned primers can be extended by PolIV. Exhibits no 3'-5' exonuclease (proofreading) activity. May be involved in translesional synthesis, in conjunction with the beta clamp from PolIII. The polypeptide is DNA polymerase IV (Pectobacterium atrosepticum (strain SCRI 1043 / ATCC BAA-672) (Erwinia carotovora subsp. atroseptica)).